Reading from the N-terminus, the 119-residue chain is Class I hydrophobin 2 (119 aa).

Positions 1-22 (MFARISTIITTLFFAMLAAATA) are cleaved as a signal peptide. Cystine bridges form between Cys-36–Cys-97, Cys-45–Cys-91, Cys-46–Cys-79, and Cys-98–Cys-112.

Belongs to the fungal hydrophobin family. In terms of assembly, self-assembles to form functional amyloid fibrils called rodlets. Self-assembly into fibrillar rodlets occurs spontaneously at hydrophobic:hydrophilic interfaces and the rodlets further associate laterally to form amphipathic monolayers.

It localises to the secreted. Its subcellular location is the cell wall. Its function is as follows. Aerial growth, conidiation, and dispersal of filamentous fungi in the environment rely upon a capability of their secreting small amphipathic proteins called hydrophobins (HPBs) with low sequence identity. Class I can self-assemble into an outermost layer of rodlet bundles on aerial cell surfaces, conferring cellular hydrophobicity that supports fungal growth, development and dispersal; whereas Class II form highly ordered films at water-air interfaces through intermolecular interactions but contribute nothing to the rodlet structure. Abh2 is a class I hydrophobin involved in the emergence of aerial hyphae and strands. This Agaricus bisporus (White button mushroom) protein is Class I hydrophobin 2.